A 301-amino-acid chain; its full sequence is Sulfate adenylyltransferase subunit 2 (301 aa).

Belongs to the PAPS reductase family. CysD subfamily. In terms of assembly, heterodimer composed of CysD, the smaller subunit, and CysN.

It catalyses the reaction sulfate + ATP + H(+) = adenosine 5'-phosphosulfate + diphosphate. Its pathway is sulfur metabolism; hydrogen sulfide biosynthesis; sulfite from sulfate: step 1/3. Functionally, with CysN forms the ATP sulfurylase (ATPS) that catalyzes the adenylation of sulfate producing adenosine 5'-phosphosulfate (APS) and diphosphate, the first enzymatic step in sulfur assimilation pathway. APS synthesis involves the formation of a high-energy phosphoric-sulfuric acid anhydride bond driven by GTP hydrolysis by CysN coupled to ATP hydrolysis by CysD. The protein is Sulfate adenylyltransferase subunit 2 of Geobacter metallireducens (strain ATCC 53774 / DSM 7210 / GS-15).